Here is a 478-residue protein sequence, read N- to C-terminus: 3-isopropylmalate dehydratase large subunit (478 aa).

Residues Cys-359, Cys-420, and Cys-423 each coordinate [4Fe-4S] cluster.

The protein belongs to the aconitase/IPM isomerase family. LeuC type 1 subfamily. As to quaternary structure, heterodimer of LeuC and LeuD. It depends on [4Fe-4S] cluster as a cofactor.

The catalysed reaction is (2R,3S)-3-isopropylmalate = (2S)-2-isopropylmalate. It functions in the pathway amino-acid biosynthesis; L-leucine biosynthesis; L-leucine from 3-methyl-2-oxobutanoate: step 2/4. In terms of biological role, catalyzes the isomerization between 2-isopropylmalate and 3-isopropylmalate, via the formation of 2-isopropylmaleate. This chain is 3-isopropylmalate dehydratase large subunit, found in Psychrobacter sp. (strain PRwf-1).